The following is a 692-amino-acid chain: Catalase-B (692 aa).

Residues His-69 and Asn-142 contribute to the active site. Heme is bound at residue Tyr-356.

It belongs to the catalase family. The cofactor is heme.

Its subcellular location is the cytoplasm. It carries out the reaction 2 H2O2 = O2 + 2 H2O. In terms of biological role, occurs in almost all aerobically respiring organisms and serves to protect cells from the toxic effects of hydrogen peroxide. Its accumulation in prespore cells affords the spores protection from oxidation during prolonged dormancy. Required for normal developmental timing, possibly through a regulatory role in differentiation and morphogenesis. The protein is Catalase-B (catB) of Dictyostelium discoideum (Social amoeba).